The primary structure comprises 306 residues: Maltose operon periplasmic protein (306 aa).

Positions 1-22 (MKMNKSLIVLCLSAGLLASAPG) form a signal peptide, or 26.

To S.typhimurium MalM.

It is found in the periplasm. Not yet known. Might function in the uptake of a still unidentified substrate. In Escherichia coli (strain K12), this protein is Maltose operon periplasmic protein (malM).